A 421-amino-acid polypeptide reads, in one-letter code: UDP-N-acetylglucosamine 1-carboxyvinyltransferase (421 aa).

Residue 22–23 (KN) coordinates phosphoenolpyruvate. R92 contributes to the UDP-N-acetyl-alpha-D-glucosamine binding site. The active-site Proton donor is the C116. C116 is subject to 2-(S-cysteinyl)pyruvic acid O-phosphothioketal. 2 residues coordinate UDP-N-acetyl-alpha-D-glucosamine: D306 and V328.

Belongs to the EPSP synthase family. MurA subfamily.

Its subcellular location is the cytoplasm. It carries out the reaction phosphoenolpyruvate + UDP-N-acetyl-alpha-D-glucosamine = UDP-N-acetyl-3-O-(1-carboxyvinyl)-alpha-D-glucosamine + phosphate. It functions in the pathway cell wall biogenesis; peptidoglycan biosynthesis. In terms of biological role, cell wall formation. Adds enolpyruvyl to UDP-N-acetylglucosamine. In Thermotoga maritima (strain ATCC 43589 / DSM 3109 / JCM 10099 / NBRC 100826 / MSB8), this protein is UDP-N-acetylglucosamine 1-carboxyvinyltransferase.